A 290-amino-acid polypeptide reads, in one-letter code: MDKIIKSIAQSGAFRAYVLDSTETVALAQEKHNTLSSSTVALGRTLIANQILAANQKGDSKITVKVIGDSSFGHIISVADTKGHVKGYIQNTGVDIKKTATGEVLVGPFMGNGHFVTIIDYGTGNPYTSTTPLITGEIGEDFAYYLTESEQTPSAIGLNVLLDENDKVKVAGGFMVQVLPGASEEEIARYEKRLQEMPAISHLLASKNHVDALLEAIYGDEPYKRLSEEPLSFQCDCSRERFEAALMTLPKADLQAMIDEDKGAEIVCQFCGTKYQFNESDLEAIISDKA.

Cystine bridges form between Cys235/Cys237 and Cys268/Cys271.

This sequence belongs to the HSP33 family. In terms of processing, under oxidizing conditions two disulfide bonds are formed involving the reactive cysteines. Under reducing conditions zinc is bound to the reactive cysteines and the protein is inactive.

It localises to the cytoplasm. Its function is as follows. Redox regulated molecular chaperone. Protects both thermally unfolding and oxidatively damaged proteins from irreversible aggregation. Plays an important role in the bacterial defense system toward oxidative stress. In Streptococcus pyogenes serotype M1, this protein is 33 kDa chaperonin.